Here is a 304-residue protein sequence, read N- to C-terminus: Aspartate carbamoyltransferase catalytic subunit (304 aa).

Residues arginine 49 and threonine 50 each contribute to the carbamoyl phosphate site. L-aspartate is bound at residue lysine 77. Carbamoyl phosphate contacts are provided by arginine 99, histidine 127, and glutamine 130. L-aspartate-binding residues include arginine 160 and arginine 211. Positions 250 and 251 each coordinate carbamoyl phosphate. At serine 303 the chain carries Phosphoserine.

Belongs to the aspartate/ornithine carbamoyltransferase superfamily. ATCase family. Heterododecamer (2C3:3R2) of six catalytic PyrB chains organized as two trimers (C3), and six regulatory PyrI chains organized as three dimers (R2).

It catalyses the reaction carbamoyl phosphate + L-aspartate = N-carbamoyl-L-aspartate + phosphate + H(+). It participates in pyrimidine metabolism; UMP biosynthesis via de novo pathway; (S)-dihydroorotate from bicarbonate: step 2/3. Catalyzes the condensation of carbamoyl phosphate and aspartate to form carbamoyl aspartate and inorganic phosphate, the committed step in the de novo pyrimidine nucleotide biosynthesis pathway. The sequence is that of Aspartate carbamoyltransferase catalytic subunit from Bacillus subtilis (strain 168).